The sequence spans 769 residues: Major inner protein P1 (769 aa).

As to quaternary structure, homodimer. Associates with the polymerase complex.

Its subcellular location is the virion. In terms of biological role, P1 is the major inner capsid (core) protein of the polyhedral procapsid, which is responsible for genomic replication and transcription. Forms a dodecahedral shell from 60 asymmetric dimers. Binds to RNA and may be involved in genomic packaging. In Pseudomonas phage phi6 (Bacteriophage phi-6), this protein is Major inner protein P1 (P1).